A 514-amino-acid polypeptide reads, in one-letter code: Sugar transport protein 4 (514 aa).

Residues 1–22 (MAGGFVSQTPGVRNYNYKLTPK) are Cytoplasmic-facing. Transmembrane regions (helical) follow at residues 23 to 43 (VFVT…DLGI), 80 to 100 (LLTL…LFAS), 117 to 137 (FTFF…MLLI), 140 to 160 (ILLG…LSEM), 172 to 192 (GFQV…YFTA), 202 to 222 (ISLG…LILP), 283 to 303 (LIMT…VITF), 321 to 341 (LSAM…VFTV), 348 to 368 (ILFL…GAMI), 387 to 407 (LIVA…GPLG), 426 to 446 (INVS…LTML), and 451 to 471 (FGLF…IYLM). Topologically, residues 472–514 (LPETKNVPIEEMNRVWKAHWFWGKFIPDEAVNMGAAEMQQKSV) are cytoplasmic.

This sequence belongs to the major facilitator superfamily. Sugar transporter (TC 2.A.1.1) family. Mostly in flowers and roots, especially in anthers, including pollen, and root tips. Also present in some hydathodes.

Its subcellular location is the cell membrane. In terms of biological role, mediates an active uptake of hexoses, probably by sugar/hydrogen symport. Can transport glucose, methylglucose, galactose, xylose and mannose, but not fructose. This chain is Sugar transport protein 4 (STP4), found in Arabidopsis thaliana (Mouse-ear cress).